The following is a 233-amino-acid chain: Large ribosomal subunit protein uL1 (233 aa).

This sequence belongs to the universal ribosomal protein uL1 family. Part of the 50S ribosomal subunit.

In terms of biological role, binds directly to 23S rRNA. The L1 stalk is quite mobile in the ribosome, and is involved in E site tRNA release. Its function is as follows. Protein L1 is also a translational repressor protein, it controls the translation of the L11 operon by binding to its mRNA. This Campylobacter curvus (strain 525.92) protein is Large ribosomal subunit protein uL1.